The following is a 564-amino-acid chain: Dihydroxy-acid dehydratase (564 aa).

The span at 1 to 10 (MTDTRTKRRM) shows a compositional bias: basic residues. Residues 1–23 (MTDTRTKRRMNWNSHHITQGDER) form a disordered region. Residue cysteine 57 coordinates [2Fe-2S] cluster. Residue aspartate 89 coordinates Mg(2+). Cysteine 130 lines the [2Fe-2S] cluster pocket. Mg(2+) contacts are provided by aspartate 131 and lysine 132. An N6-carboxylysine modification is found at lysine 132. Cysteine 202 provides a ligand contact to [2Fe-2S] cluster. Glutamate 454 serves as a coordination point for Mg(2+). Serine 480 acts as the Proton acceptor in catalysis.

It belongs to the IlvD/Edd family. Homodimer. The cofactor is [2Fe-2S] cluster. It depends on Mg(2+) as a cofactor.

The catalysed reaction is (2R)-2,3-dihydroxy-3-methylbutanoate = 3-methyl-2-oxobutanoate + H2O. It catalyses the reaction (2R,3R)-2,3-dihydroxy-3-methylpentanoate = (S)-3-methyl-2-oxopentanoate + H2O. It functions in the pathway amino-acid biosynthesis; L-isoleucine biosynthesis; L-isoleucine from 2-oxobutanoate: step 3/4. Its pathway is amino-acid biosynthesis; L-valine biosynthesis; L-valine from pyruvate: step 3/4. In terms of biological role, functions in the biosynthesis of branched-chain amino acids. Catalyzes the dehydration of (2R,3R)-2,3-dihydroxy-3-methylpentanoate (2,3-dihydroxy-3-methylvalerate) into 2-oxo-3-methylpentanoate (2-oxo-3-methylvalerate) and of (2R)-2,3-dihydroxy-3-methylbutanoate (2,3-dihydroxyisovalerate) into 2-oxo-3-methylbutanoate (2-oxoisovalerate), the penultimate precursor to L-isoleucine and L-valine, respectively. The polypeptide is Dihydroxy-acid dehydratase (Deinococcus geothermalis (strain DSM 11300 / CIP 105573 / AG-3a)).